A 65-amino-acid chain; its full sequence is UPF0291 protein BBR47_33060 (65 aa).

The protein belongs to the UPF0291 family.

It localises to the cytoplasm. The chain is UPF0291 protein BBR47_33060 from Brevibacillus brevis (strain 47 / JCM 6285 / NBRC 100599).